The primary structure comprises 454 residues: Histidine--tRNA ligase (454 aa).

The protein belongs to the class-II aminoacyl-tRNA synthetase family. As to quaternary structure, homodimer.

It is found in the cytoplasm. It catalyses the reaction tRNA(His) + L-histidine + ATP = L-histidyl-tRNA(His) + AMP + diphosphate + H(+). The polypeptide is Histidine--tRNA ligase (Porphyromonas gingivalis (strain ATCC BAA-308 / W83)).